A 150-amino-acid chain; its full sequence is 3-hydroxyacyl-[acyl-carrier-protein] dehydratase FabZ (150 aa).

The active site involves H53.

This sequence belongs to the thioester dehydratase family. FabZ subfamily.

Its subcellular location is the cytoplasm. The enzyme catalyses a (3R)-hydroxyacyl-[ACP] = a (2E)-enoyl-[ACP] + H2O. In terms of biological role, involved in unsaturated fatty acids biosynthesis. Catalyzes the dehydration of short chain beta-hydroxyacyl-ACPs and long chain saturated and unsaturated beta-hydroxyacyl-ACPs. The chain is 3-hydroxyacyl-[acyl-carrier-protein] dehydratase FabZ from Proteus mirabilis (strain HI4320).